The sequence spans 506 residues: Maturase K (506 aa).

This sequence belongs to the intron maturase 2 family. MatK subfamily.

Its subcellular location is the plastid. It is found in the chloroplast. In terms of biological role, usually encoded in the trnK tRNA gene intron. Probably assists in splicing its own and other chloroplast group II introns. This is Maturase K from Andromeda polifolia (Bog rosemary).